Reading from the N-terminus, the 476-residue chain is Bifunctional protein HldE (476 aa).

Residues 1–319 (MKVSLPAFEK…EALALHHGES (319 aa)) are ribokinase. 195–198 (NMSE) lines the ATP pocket. Aspartate 264 is a catalytic residue. Positions 345–476 (MTNGCFDILH…AIIQNIMANQ (132 aa)) are cytidylyltransferase.

The protein in the N-terminal section; belongs to the carbohydrate kinase PfkB family. It in the C-terminal section; belongs to the cytidylyltransferase family. In terms of assembly, homodimer.

The catalysed reaction is D-glycero-beta-D-manno-heptose 7-phosphate + ATP = D-glycero-beta-D-manno-heptose 1,7-bisphosphate + ADP + H(+). The enzyme catalyses D-glycero-beta-D-manno-heptose 1-phosphate + ATP + H(+) = ADP-D-glycero-beta-D-manno-heptose + diphosphate. The protein operates within nucleotide-sugar biosynthesis; ADP-L-glycero-beta-D-manno-heptose biosynthesis; ADP-L-glycero-beta-D-manno-heptose from D-glycero-beta-D-manno-heptose 7-phosphate: step 1/4. It participates in nucleotide-sugar biosynthesis; ADP-L-glycero-beta-D-manno-heptose biosynthesis; ADP-L-glycero-beta-D-manno-heptose from D-glycero-beta-D-manno-heptose 7-phosphate: step 3/4. In terms of biological role, catalyzes the phosphorylation of D-glycero-D-manno-heptose 7-phosphate at the C-1 position to selectively form D-glycero-beta-D-manno-heptose-1,7-bisphosphate. Its function is as follows. Catalyzes the ADP transfer from ATP to D-glycero-beta-D-manno-heptose 1-phosphate, yielding ADP-D-glycero-beta-D-manno-heptose. The chain is Bifunctional protein HldE from Shewanella baltica (strain OS185).